The primary structure comprises 455 residues: Indoleacetamide hydrolase (455 aa).

Active-site charge relay system residues include Lys-71 and Ser-146. The Acyl-ester intermediate role is filled by Ser-170.

The protein belongs to the amidase family.

The protein operates within plant hormone metabolism; auxin biosynthesis. Hydrolyzes indole-3-acetamide (IAM) into indole-3-acetic acid (IAA). This Pseudomonas savastanoi (Pseudomonas syringae pv. savastanoi) protein is Indoleacetamide hydrolase (iaaH).